We begin with the raw amino-acid sequence, 96 residues long: Protein Vpr (96 aa).

Residues methionine 1–leucine 42 are homooligomerization. 3 positions are modified to phosphoserine; by host: serine 79, serine 94, and serine 96.

This sequence belongs to the HIV-1 VPR protein family. Homooligomer, may form homodimer. Interacts with p6-gag region of the Pr55 Gag precursor protein through a (Leu-X-X)4 motif near the C-terminus of the P6gag protein. Interacts with host UNG. May interact with host RAD23A/HHR23A. Interacts with host VPRBP/DCAF1, leading to hijack the CUL4A-RBX1-DDB1-DCAF1/VPRBP complex, mediating ubiquitination of host proteins such as TERT and ZGPAT and arrest of the cell cycle in G2 phase. Phosphorylated on several residues by host. These phosphorylations regulate VPR activity for the nuclear import of the HIV-1 pre-integration complex.

It is found in the virion. The protein resides in the host nucleus. The protein localises to the host extracellular space. Functionally, during virus replication, may deplete host UNG protein, and incude G2-M cell cycle arrest. Acts by targeting specific host proteins for degradation by the 26S proteasome, through association with the cellular CUL4A-DDB1 E3 ligase complex by direct interaction with host VPRPB/DCAF-1. Cell cycle arrest reportedly occurs within hours of infection and is not blocked by antiviral agents, suggesting that it is initiated by the VPR carried into the virion. Additionally, VPR induces apoptosis in a cell cycle dependent manner suggesting that these two effects are mechanistically linked. Detected in the serum and cerebrospinal fluid of AIDS patient, VPR may also induce cell death to bystander cells. In terms of biological role, during virus entry, plays a role in the transport of the viral pre-integration (PIC) complex to the host nucleus. This function is crucial for viral infection of non-dividing macrophages. May act directly at the nuclear pore complex, by binding nucleoporins phenylalanine-glycine (FG)-repeat regions. This chain is Protein Vpr, found in Human immunodeficiency virus type 1 group M subtype K (isolate 96CM-MP535) (HIV-1).